Here is a 372-residue protein sequence, read N- to C-terminus: DNA/RNA-binding protein ALBA4 (372 aa).

This sequence belongs to the histone-like Alba family. As to quaternary structure, identified in a TARE6-associated complex consisting of over 30 proteins and including ALBA1, ALBA2 and ALBA4; the complex binds to the non-coding subtelomeric repeat region TARE6.

Its subcellular location is the nucleus. It localises to the chromosome. It is found in the telomere. The protein localises to the cytoplasm. Its function is as follows. Possesses DNA- and RNA-binding activities. Binds to DNA fragments longer than 14 base pairs with relaxed sequence specificity. Associates with the subtelomeric TARE6 repeats. Regulates the abundance of transcript sub-populations in a stage-specific manner. Regulates activation of male gametocytes. Participates in the coordination of sporozoite development in the oocyst. This Plasmodium falciparum (isolate 3D7) protein is DNA/RNA-binding protein ALBA4.